The sequence spans 105 residues: Vacuolar ATPase assembly integral membrane protein VMA21 homolog (105 aa).

The interval 1–26 (MSTKNKKAAGGNGGAPKQTRQQSHDS) is disordered. Over 1–36 (MSTKNKKAAGGNGGAPKQTRQQSHDSQDYSSFKTVL) the chain is Cytoplasmic. Residues 37-57 (FYCMLIVFLPVLTFFVLKGFV) form a helical membrane-spanning segment. Residues 58 to 68 (LDQFLDISEVK) lie on the Lumenal side of the membrane. The helical transmembrane segment at 69-89 (VNIASAVGAVVALHIALGLYI) threads the bilayer. At 90–105 (YRAYFGTTGSKASKTD) the chain is on the cytoplasmic side.

This sequence belongs to the VMA21 family.

The protein localises to the endoplasmic reticulum membrane. It is found in the endoplasmic reticulum-Golgi intermediate compartment membrane. It localises to the cytoplasmic vesicle. Its subcellular location is the COPII-coated vesicle membrane. Functionally, required for the assembly of the V0 complex of the vacuolar ATPase (V-ATPase) in the endoplasmic reticulum. This chain is Vacuolar ATPase assembly integral membrane protein VMA21 homolog, found in Drosophila erecta (Fruit fly).